A 435-amino-acid polypeptide reads, in one-letter code: MKKGIVAIVGRPNVGKSSLFNRIIREKKSIVEDTPGVTRDRIYGTAEWLTREFIVIDTGGITLEDQPFAKEIKVQAEIAMEEADVIVFLLNHQEGLSDEDKMIAKILYKTKKPIVLAVNKYDKKTSDFDQYEYMSLGFGEPILISATHGIGTGDLLDDIIHQMPSHEEINKDNRTRVSIIGRPNVGKSSLVNSLIGEERMIVSDIPGTTLDAVDSVVKVNNIEYTLIDTAGIRKKSKIFQNVEKYSYLRSLTTINGSDVVLLMLDASVPISDLDTNIGGLAFEEKKPIIIIANKWDLVENKEKEILKKEDEIRAYFKYLAYAKILFVSAHDKTRITKIFTAVEDIRTALDKKIKTSVFNEVLNKAQLINPAPNFNGGRLKIYYGAQVEAYLPTFVLFVNNPDYVHFSYKRFLENQIRLQFGFEGVPMSIIFRERK.

EngA-type G domains are found at residues 4–167 (GIVA…PSHE) and 175–350 (TRVS…TALD). GTP contacts are provided by residues 10 to 17 (GRPNVGKS), 57 to 61 (DTGGI), 119 to 122 (NKYD), 181 to 188 (GRPNVGKS), 228 to 232 (DTAGI), and 293 to 296 (NKWD). The 85-residue stretch at 351–435 (KKIKTSVFNE…PMSIIFRERK (85 aa)) folds into the KH-like domain.

Belongs to the TRAFAC class TrmE-Era-EngA-EngB-Septin-like GTPase superfamily. EngA (Der) GTPase family. Associates with the 50S ribosomal subunit.

In terms of biological role, GTPase that plays an essential role in the late steps of ribosome biogenesis. In Mesoplasma florum (strain ATCC 33453 / NBRC 100688 / NCTC 11704 / L1) (Acholeplasma florum), this protein is GTPase Der.